A 38-amino-acid polypeptide reads, in one-letter code: MTTPNPNKQGAELSRTGLYWGLLLIFVLAVLFSSYFFN.

Residues 17 to 37 (GLYWGLLLIFVLAVLFSSYFF) form a helical membrane-spanning segment.

The protein belongs to the PsbL family. As to quaternary structure, PSII is composed of 1 copy each of membrane proteins PsbA, PsbB, PsbC, PsbD, PsbE, PsbF, PsbH, PsbI, PsbJ, PsbK, PsbL, PsbM, PsbT, PsbX, PsbY, PsbZ, Psb30/Ycf12, at least 3 peripheral proteins of the oxygen-evolving complex and a large number of cofactors. It forms dimeric complexes.

The protein localises to the plastid. The protein resides in the chloroplast thylakoid membrane. One of the components of the core complex of photosystem II (PSII). PSII is a light-driven water:plastoquinone oxidoreductase that uses light energy to abstract electrons from H(2)O, generating O(2) and a proton gradient subsequently used for ATP formation. It consists of a core antenna complex that captures photons, and an electron transfer chain that converts photonic excitation into a charge separation. This subunit is found at the monomer-monomer interface and is required for correct PSII assembly and/or dimerization. The chain is Photosystem II reaction center protein L from Staurastrum punctulatum (Green alga).